Here is a 1690-residue protein sequence, read N- to C-terminus: DNA-directed RNA polymerase subunit beta' (1690 aa).

Positions 63, 65, 78, and 81 each coordinate Zn(2+). Mg(2+) is bound by residues D753, D755, and D757. Zn(2+) contacts are provided by C1107, C1295, C1302, and C1305.

It belongs to the RNA polymerase beta' chain family. In terms of assembly, the RNAP catalytic core consists of 2 alpha, 1 beta, 1 beta' and 1 omega subunit. When a sigma factor is associated with the core the holoenzyme is formed, which can initiate transcription. Mg(2+) is required as a cofactor. It depends on Zn(2+) as a cofactor.

It catalyses the reaction RNA(n) + a ribonucleoside 5'-triphosphate = RNA(n+1) + diphosphate. In terms of biological role, DNA-dependent RNA polymerase catalyzes the transcription of DNA into RNA using the four ribonucleoside triphosphates as substrates. This chain is DNA-directed RNA polymerase subunit beta', found in Thermotoga petrophila (strain ATCC BAA-488 / DSM 13995 / JCM 10881 / RKU-1).